Here is a 431-residue protein sequence, read N- to C-terminus: MSQLPFIVGAPGKVIIFGEHAAVYGKPAIAAALSLRCYLLVSPSSDSNTIRLQFPDIKLDHSWNIKDLPWEEIKPYLTYDSANKPQIPSELVPEIVDKLSSFLNGFDNKMHYYACFCFLYLLMNLCDSKVSGMNFIVRSTLPIGAGLGSSASTSVCLSSALALMGGWINKPSLHENDKLDTADIPDLEFIDKWSLIGEKCFHGNPSGIDNAVATFGGAVMFQRTSTPEQPSIRTNMRNFPAIKLLLTNTKVPKSTADLVAGVGRLNAEFNSISTSILTAIEHLSQEAYKVMMNPMFGREETNVLRKLVNINHGLLVALGVSHPALETVKIIGDKHRIGATKLTGAGGGGCAITLVNDDVEESVIHNAIKEFEDSGYESFETSLGGKGVGILFHEDLDDATKFSESQFCNYVDRAAIEDSLGMANVKEWKFW.

ATP is bound by residues K13, S139, and 144–150 (GAGLGSS). Residues S150 and E198 each contribute to the Mg(2+) site. Residue D209 is the Proton acceptor of the active site.

The protein belongs to the GHMP kinase family. Mevalonate kinase subfamily. Homodimer.

Its subcellular location is the cytoplasm. It is found in the cytosol. The catalysed reaction is (R)-mevalonate + ATP = (R)-5-phosphomevalonate + ADP + H(+). It functions in the pathway isoprenoid biosynthesis; isopentenyl diphosphate biosynthesis via mevalonate pathway; isopentenyl diphosphate from (R)-mevalonate: step 1/3. In terms of biological role, mevalonate kinase; part of the second module of ergosterol biosynthesis pathway that includes the middle steps of the pathway. ERG12 converts mevalonate into 5-phosphomevalonate. The second module is carried out in the vacuole and involves the formation of farnesyl diphosphate, which is also an important intermediate in the biosynthesis of ubiquinone, dolichol, heme and prenylated proteins. Activity by the mevalonate kinase ERG12 first converts mevalonate into 5-phosphomevalonate. 5-phosphomevalonate is then further converted to 5-diphosphomevalonate by the phosphomevalonate kinase ERG8. The diphosphomevalonate decarboxylase MVD then produces isopentenyl diphosphate. The isopentenyl-diphosphate delta-isomerase IDI1 then catalyzes the 1,3-allylic rearrangement of the homoallylic substrate isopentenyl (IPP) to its highly electrophilic allylic isomer, dimethylallyl diphosphate (DMAPP). Finally the farnesyl diphosphate synthase ERG20 catalyzes the sequential condensation of isopentenyl pyrophosphate with dimethylallyl pyrophosphate, and then with the resultant geranylpyrophosphate to the ultimate product farnesyl pyrophosphate. The chain is Mevalonate kinase from Candida albicans (strain SC5314 / ATCC MYA-2876) (Yeast).